Reading from the N-terminus, the 591-residue chain is Homeobox domain-containing transcription factor HOB1 (591 aa).

A compositionally biased stretch (basic and acidic residues) spans 1–15 (MEGKNEDMHTPRGPE). Disordered stretches follow at residues 1–37 (MEGKNEDMHTPRGPEDASNIADEYPSPERQQQGDMLG) and 148–168 (IAGPSTLRRSPLPDTFSRSPA). Positions 176-223 (IAILRESYARNPNPDRKELERLAARTGRPWNKIREYFRQRRNKLRGLE) form a DNA-binding region, homeobox. Disordered stretches follow at residues 420–463 (DAGL…PRES) and 543–563 (DAIERRNAGESKRKRDDALTE). Positions 427-441 (QGEEDQPPTVEESDQ) are enriched in acidic residues. The span at 543–560 (DAIERRNAGESKRKRDDA) shows a compositional bias: basic and acidic residues.

Its subcellular location is the nucleus. In terms of biological role, general stress-responsive transcription factor that governs multiple stress responses and adaptations. Plays a key role in virulence. Mediates the expression of LAC1, which is the major laccase involved in melanin synthesis. Positively regulates BZP4 induction under conditions of nutrient starvation and basal expression levels of MBS1 and USV101, 3 major transcription factors that independently contribute to melanin production. Also acts as a key regulator of ergosterol gene expression. This chain is Homeobox domain-containing transcription factor HOB1, found in Cryptococcus neoformans var. grubii serotype A (strain H99 / ATCC 208821 / CBS 10515 / FGSC 9487) (Filobasidiella neoformans var. grubii).